Reading from the N-terminus, the 147-residue chain is Mitochondrial import receptor subunit TOM20 homolog (147 aa).

At 1–3 (MVA) the chain is on the mitochondrial intermembrane side. Residues 4 to 26 (VGKTSAIAAGVCGALLLGYCIYF) traverse the membrane as a helical segment. Over 27 to 147 (DRKRRSDPNF…AQNLSEDDVE (121 aa)) the chain is Cytoplasmic.

The protein belongs to the Tom20 family. In terms of assembly, forms part of the preprotein translocase complex of the outer mitochondrial membrane (TOM complex). Interacts with tom22.

It localises to the mitochondrion outer membrane. Central component of the receptor complex responsible for the recognition and translocation of cytosolically synthesized mitochondrial preproteins. Together with tom22 functions as the transit peptide receptor at the surface of the mitochondrion outer membrane and facilitates the movement of preproteins into the tom40 translocation pore. The polypeptide is Mitochondrial import receptor subunit TOM20 homolog (tomm20) (Xenopus laevis (African clawed frog)).